The primary structure comprises 457 residues: Putative metabolite transport protein YwtG (457 aa).

Transmembrane regions (helical) follow at residues 7-27 (IWLYFFGALGGALYGYDTGVI), 38-58 (LGLNAFTEGLVVSSLLVGAIL), 75-95 (AIMAAALLFCIGGLGVALAPN), 97-117 (GVMVLFRIILGLAVGTSTTIV), 136-156 (LNQLMITVGILLSYIVNYIFA), 163-183 (WMLGLAAVPSLLLLIGILFMP), 240-260 (ALIAGLGLAFLQQFIGTNTII), 276-296 (ASILGTVGIGTVNVLMTLVAI), 309-329 (LFGNAGMVISLIVLALVNLFF), 340-360 (VICLGVFIVVFAVSWGPVVWV), 377-397 (VSTLMLHVGTLIVSLTYPILM), and 400-420 (IGISYLFLIYAAIGIMAFLFV). A disordered region spans residues 438–457 (DLRDKNGQGGAAGKQQTVGT).

The protein belongs to the major facilitator superfamily. Sugar transporter (TC 2.A.1.1) family.

The protein localises to the cell membrane. The polypeptide is Putative metabolite transport protein YwtG (ywtG) (Bacillus subtilis (strain 168)).